The following is a 369-amino-acid chain: UDP-3-O-acylglucosamine N-acyltransferase (369 aa).

His263 (proton acceptor) is an active-site residue.

The protein belongs to the transferase hexapeptide repeat family. LpxD subfamily. As to quaternary structure, homotrimer.

The catalysed reaction is a UDP-3-O-[(3R)-3-hydroxyacyl]-alpha-D-glucosamine + a (3R)-hydroxyacyl-[ACP] = a UDP-2-N,3-O-bis[(3R)-3-hydroxyacyl]-alpha-D-glucosamine + holo-[ACP] + H(+). It functions in the pathway bacterial outer membrane biogenesis; LPS lipid A biosynthesis. Its function is as follows. Catalyzes the N-acylation of UDP-3-O-acylglucosamine using 3-hydroxyacyl-ACP as the acyl donor. Is involved in the biosynthesis of lipid A, a phosphorylated glycolipid that anchors the lipopolysaccharide to the outer membrane of the cell. This Burkholderia ambifaria (strain MC40-6) protein is UDP-3-O-acylglucosamine N-acyltransferase.